We begin with the raw amino-acid sequence, 303 residues long: Zinc transporter ZIP9-B (303 aa).

A helical membrane pass occupies residues 7 to 27 (ISLLSLAMLVGCYVSGIIPLA). Residue asparagine 29 is glycosylated (N-linked (GlcNAc...) asparagine). Helical transmembrane passes span 35–55 (LKLV…AVIV), 102–122 (AYIG…DQIG), 142–162 (ITTT…LGAA), 172–192 (LIVF…LVSF), and 206–226 (HLLV…LGLS). Asparagine 237 carries N-linked (GlcNAc...) asparagine glycosylation. The next 2 helical transmembrane spans lie at 240 to 260 (GVAM…HVLP) and 282 to 302 (LEVC…IGHQ).

It belongs to the ZIP transporter (TC 2.A.5) family.

The protein localises to the golgi apparatus. The protein resides in the trans-Golgi network membrane. It is found in the cell membrane. It localises to the cytoplasm. Its subcellular location is the perinuclear region. The protein localises to the mitochondrion. The protein resides in the nucleus. It carries out the reaction Zn(2+)(in) = Zn(2+)(out). In terms of biological role, transports zinc ions across cell and organelle membranes into the cytoplasm and regulates intracellular zinc homeostasis. Participates in the zinc ions efflux out of the secretory compartments. Regulates intracellular zinc level, resulting in the enhancement of AKT1 and MAPK3/MAPK1 (Erk1/2) phosphorylation in response to the BCR activation. Also functions as a membrane androgen receptor that mediates, through a G protein, the non-classical androgen signaling pathway, characterized by the activation of MAPK3/MAPK1 (Erk1/2) and transcription factors CREB1 or ATF1. Moreover, has dual functions as a membrane-bound androgen receptor and as an androgen-dependent zinc transporter both of which are mediated through an inhibitory G protein (Gi) that mediates both MAP kinase and zinc signaling leading to the androgen-dependent apoptotic process. The sequence is that of Zinc transporter ZIP9-B (slc39a9-b) from Xenopus laevis (African clawed frog).